A 940-amino-acid chain; its full sequence is Isoleucine--tRNA ligase (940 aa).

Residues 58–68 (PYANGSIHIGH) carry the 'HIGH' region motif. Position 564 (glutamate 564) interacts with L-isoleucyl-5'-AMP. Positions 605–609 (KMSKS) match the 'KMSKS' region motif. ATP is bound at residue lysine 608. Zn(2+)-binding residues include cysteine 903, cysteine 906, cysteine 923, and cysteine 926.

The protein belongs to the class-I aminoacyl-tRNA synthetase family. IleS type 1 subfamily. As to quaternary structure, monomer. Zn(2+) is required as a cofactor.

It is found in the cytoplasm. It catalyses the reaction tRNA(Ile) + L-isoleucine + ATP = L-isoleucyl-tRNA(Ile) + AMP + diphosphate. In terms of biological role, catalyzes the attachment of isoleucine to tRNA(Ile). As IleRS can inadvertently accommodate and process structurally similar amino acids such as valine, to avoid such errors it has two additional distinct tRNA(Ile)-dependent editing activities. One activity is designated as 'pretransfer' editing and involves the hydrolysis of activated Val-AMP. The other activity is designated 'posttransfer' editing and involves deacylation of mischarged Val-tRNA(Ile). In Shewanella woodyi (strain ATCC 51908 / MS32), this protein is Isoleucine--tRNA ligase.